The following is a 589-amino-acid chain: Aspartate--tRNA ligase (589 aa).

Position 176 (Glu-176) interacts with L-aspartate. Residues 200-203 are aspartate; it reads QLFK. Arg-222 provides a ligand contact to L-aspartate. Residues 222 to 224 and Gln-231 contribute to the ATP site; that span reads RDE. His-449 contacts L-aspartate. Residue Glu-483 participates in ATP binding. Arg-490 serves as a coordination point for L-aspartate. ATP is bound at residue 535-538; that stretch reads GLDR.

This sequence belongs to the class-II aminoacyl-tRNA synthetase family. Type 1 subfamily. In terms of assembly, homodimer.

Its subcellular location is the cytoplasm. The enzyme catalyses tRNA(Asp) + L-aspartate + ATP = L-aspartyl-tRNA(Asp) + AMP + diphosphate. Its function is as follows. Catalyzes the attachment of L-aspartate to tRNA(Asp) in a two-step reaction: L-aspartate is first activated by ATP to form Asp-AMP and then transferred to the acceptor end of tRNA(Asp). The protein is Aspartate--tRNA ligase of Enterococcus faecalis (strain ATCC 700802 / V583).